A 142-amino-acid polypeptide reads, in one-letter code: Large ribosomal subunit protein uL11 (142 aa).

Belongs to the universal ribosomal protein uL11 family. Part of the ribosomal stalk of the 50S ribosomal subunit. Interacts with L10 and the large rRNA to form the base of the stalk. L10 forms an elongated spine to which L12 dimers bind in a sequential fashion forming a multimeric L10(L12)X complex. In terms of processing, one or more lysine residues are methylated.

In terms of biological role, forms part of the ribosomal stalk which helps the ribosome interact with GTP-bound translation factors. In Hamiltonella defensa subsp. Acyrthosiphon pisum (strain 5AT), this protein is Large ribosomal subunit protein uL11.